The sequence spans 452 residues: Phosphoglucosamine mutase (452 aa).

The active-site Phosphoserine intermediate is serine 103. Positions 103, 243, 245, and 247 each coordinate Mg(2+). Phosphoserine is present on serine 103.

It belongs to the phosphohexose mutase family. The cofactor is Mg(2+). In terms of processing, activated by phosphorylation.

The catalysed reaction is alpha-D-glucosamine 1-phosphate = D-glucosamine 6-phosphate. In terms of biological role, catalyzes the conversion of glucosamine-6-phosphate to glucosamine-1-phosphate. The chain is Phosphoglucosamine mutase from Limosilactobacillus fermentum (strain NBRC 3956 / LMG 18251) (Lactobacillus fermentum).